The sequence spans 245 residues: tRNA (guanine-N(7)-)-methyltransferase (245 aa).

S-adenosyl-L-methionine is bound by residues Glu75, Glu100, Asp127, and Asp150. Asp150 is an active-site residue. Substrate contacts are provided by residues Lys154, Asp186, and 223–226 (TKFE).

It belongs to the class I-like SAM-binding methyltransferase superfamily. TrmB family.

The enzyme catalyses guanosine(46) in tRNA + S-adenosyl-L-methionine = N(7)-methylguanosine(46) in tRNA + S-adenosyl-L-homocysteine. It participates in tRNA modification; N(7)-methylguanine-tRNA biosynthesis. Its function is as follows. Catalyzes the formation of N(7)-methylguanine at position 46 (m7G46) in tRNA. The sequence is that of tRNA (guanine-N(7)-)-methyltransferase from Photobacterium profundum (strain SS9).